Here is a 535-residue protein sequence, read N- to C-terminus: BAR/IMD domain-containing adapter protein 2 (535 aa).

An IMD domain is found at 1–250; that stretch reads MSLSRSEEMH…AQLMQQMANS (250 aa). Residues 1–251 adopt a coiled-coil conformation; it reads MSLSRSEEMH…QLMQQMANSN (251 aa). Phosphoserine occurs at positions 262, 324, 326, and 337. The segment at 308–370 is disordered; sequence SEDYNPWADR…TLPRSSSMAA (63 aa). A compositionally biased stretch (low complexity) spans 321–335; it reads QPKSLSPPQSQSKLS. Thr341 is modified (phosphothreonine). Ser347 is modified (phosphoserine). Over residues 349–368 the composition is skewed to polar residues; that stretch reads TPKNSYATTENKTLPRSSSM. Thr361 is subject to Phosphothreonine. A phosphoserine mark is found at Ser367, Ser385, Ser396, and Ser455. The region spanning 375-438 is the SH3 domain; the sequence is NGRMRVKAIF…PFSYTRVLDS (64 aa). The tract at residues 445-486 is disordered; sequence HMSLQQGKSSSTGNLLDKDDLALPPPDYGTSSRAFPSQTAGT. Composition is skewed to polar residues over residues 447–458 and 473–486; these read SLQQGKSSSTGN and GTSS…TAGT.

Homodimer. Interacts with CDC42 and RAC1 that have been activated by GTP binding. Binds TIAM1. Interacts with ATN1, ADGRB1, DIAPH1, EPS8, SHANK1, SHANK2, SHANK3, WASF1 and WASF2. Interacts with ENAH after recruitment of CDC42. Phosphorylated on tyrosine residues by INSR in response to insulin treatment. In terms of tissue distribution, ubiquitous.

The protein resides in the cytoplasm. Its subcellular location is the membrane. It is found in the cell projection. The protein localises to the filopodium. It localises to the ruffle. The protein resides in the cytoskeleton. Its function is as follows. Adapter protein that links membrane-bound small G-proteins to cytoplasmic effector proteins. Necessary for CDC42-mediated reorganization of the actin cytoskeleton and for RAC1-mediated membrane ruffling. Involved in the regulation of the actin cytoskeleton by WASF family members and the Arp2/3 complex. Plays a role in neurite growth. Acts syngeristically with ENAH to promote filipodia formation. Plays a role in the reorganization of the actin cytoskeleton in response to bacterial infection. Participates in actin bundling when associated with EPS8, promoting filopodial protrusions. This is BAR/IMD domain-containing adapter protein 2 (Baiap2) from Rattus norvegicus (Rat).